The sequence spans 84 residues: Dolichol phosphate-mannose biosynthesis regulatory protein (84 aa).

The next 2 membrane-spanning stretches (helical) occupy residues 11 to 31 (LGLV…VILL) and 49 to 69 (YAVA…GLFI).

The protein belongs to the DPM2 family. As to quaternary structure, component of the dolichol-phosphate mannose (DPM) synthase complex composed of DPM1, DPM2 and DPM3; in the complex interacts directly with DPM3. Component of the glycosylphosphatidylinositol-N-acetylglucosaminyltransferase (GPI-GnT) complex composed at least by PIGA, PIGC, PIGH, PIGP, PIGQ, PIGY and DPM2. Interacts with PIGA, PIGC and PIGQ.

The protein localises to the endoplasmic reticulum membrane. The protein operates within protein modification; protein glycosylation. Its function is as follows. Regulates the biosynthesis of dolichol phosphate-mannose. Regulatory subunit of the dolichol-phosphate mannose (DPM) synthase complex; essential for the ER localization and stable expression of DPM1. Part of the glycosylphosphatidylinositol-N-acetylglucosaminyltransferase (GPI-GnT) complex that catalyzes the transfer of N-acetylglucosamine from UDP-N-acetylglucosamine to phosphatidylinositol and participates in the first step of GPI biosynthesis. May act by regulating the GPI-GNT complex. This Homo sapiens (Human) protein is Dolichol phosphate-mannose biosynthesis regulatory protein.